A 213-amino-acid chain; its full sequence is Large ribosomal subunit protein uL1 (213 aa).

It belongs to the universal ribosomal protein uL1 family. In terms of assembly, part of the 50S ribosomal subunit.

Functionally, probably involved in E site tRNA release. Binds directly to 23S rRNA. Protein L1 is also a translational repressor protein, it controls the translation of its operon by binding to its mRNA. This is Large ribosomal subunit protein uL1 from Methanothermococcus thermolithotrophicus (Methanococcus thermolithotrophicus).